Here is a 238-residue protein sequence, read N- to C-terminus: Aspartate/glutamate leucyltransferase (238 aa).

The protein belongs to the R-transferase family. Bpt subfamily.

It localises to the cytoplasm. It carries out the reaction N-terminal L-glutamyl-[protein] + L-leucyl-tRNA(Leu) = N-terminal L-leucyl-L-glutamyl-[protein] + tRNA(Leu) + H(+). It catalyses the reaction N-terminal L-aspartyl-[protein] + L-leucyl-tRNA(Leu) = N-terminal L-leucyl-L-aspartyl-[protein] + tRNA(Leu) + H(+). Functions in the N-end rule pathway of protein degradation where it conjugates Leu from its aminoacyl-tRNA to the N-termini of proteins containing an N-terminal aspartate or glutamate. This is Aspartate/glutamate leucyltransferase from Nitrosococcus oceani (strain ATCC 19707 / BCRC 17464 / JCM 30415 / NCIMB 11848 / C-107).